Here is a 128-residue protein sequence, read N- to C-terminus: MAYRKLGRTSSQRKAMLRDLTTDLLINESIVTTEARAKEIRKTVEKMITLGKRGDLHARRQAAAYVRNEIASENYDEVTDKYTSTTALQKLFSEIAPRYAERNGGYTRILKTEPRRGDAAPMAIIELV.

Belongs to the bacterial ribosomal protein bL17 family. Part of the 50S ribosomal subunit. Contacts protein L32.

This Streptococcus pyogenes serotype M5 (strain Manfredo) protein is Large ribosomal subunit protein bL17.